The chain runs to 826 residues: Periplasmic nitrate reductase (826 aa).

The tat-type signal signal peptide spans 1-32 (MSISRREFLKANAAVAAATAVGATLPVKIVEA). Residues 39-95 (IKWDKAPCRFCGVGCSVLVGTDNGKVVATKGDPESPVNKGLNCIKGYFLSKIMYGKD) form the 4Fe-4S Mo/W bis-MGD-type domain. [4Fe-4S] cluster is bound by residues Cys-46, Cys-49, Cys-53, and Cys-81. Residues Lys-83, Gln-150, Asn-175, Cys-179, 212–219 (WGANMAEM), 262–264 (QSD), Met-372, Gln-376, Asn-482, 508–509 (SD), Lys-531, Asp-558, and 716–725 (TGRVLEHWHT) each bind Mo-bis(molybdopterin guanine dinucleotide). Substrate is bound at residue Phe-792. Asn-800 and Lys-817 together coordinate Mo-bis(molybdopterin guanine dinucleotide).

Belongs to the prokaryotic molybdopterin-containing oxidoreductase family. NasA/NapA/NarB subfamily. In terms of assembly, component of the periplasmic nitrate reductase NapAB complex composed of NapA and NapB. Requires [4Fe-4S] cluster as cofactor. Mo-bis(molybdopterin guanine dinucleotide) is required as a cofactor. In terms of processing, predicted to be exported by the Tat system. The position of the signal peptide cleavage has not been experimentally proven.

The protein resides in the periplasm. The catalysed reaction is 2 Fe(II)-[cytochrome] + nitrate + 2 H(+) = 2 Fe(III)-[cytochrome] + nitrite + H2O. Catalytic subunit of the periplasmic nitrate reductase complex NapAB. Receives electrons from NapB and catalyzes the reduction of nitrate to nitrite. The polypeptide is Periplasmic nitrate reductase (Shewanella halifaxensis (strain HAW-EB4)).